Consider the following 324-residue polypeptide: Glyoxylate/hydroxypyruvate reductase B (324 aa).

Active-site residues include Arg237 and Glu266. The active-site Proton donor is His285.

Belongs to the D-isomer specific 2-hydroxyacid dehydrogenase family. GhrB subfamily. Homodimer.

It is found in the cytoplasm. It carries out the reaction glycolate + NADP(+) = glyoxylate + NADPH + H(+). The catalysed reaction is (R)-glycerate + NAD(+) = 3-hydroxypyruvate + NADH + H(+). The enzyme catalyses (R)-glycerate + NADP(+) = 3-hydroxypyruvate + NADPH + H(+). Its function is as follows. Catalyzes the NADPH-dependent reduction of glyoxylate and hydroxypyruvate into glycolate and glycerate, respectively. This Salmonella paratyphi B (strain ATCC BAA-1250 / SPB7) protein is Glyoxylate/hydroxypyruvate reductase B.